Here is a 512-residue protein sequence, read N- to C-terminus: Lysine--tRNA ligase (512 aa).

Glutamate 421 and glutamate 428 together coordinate Mg(2+).

This sequence belongs to the class-II aminoacyl-tRNA synthetase family. As to quaternary structure, homodimer. The cofactor is Mg(2+).

Its subcellular location is the cytoplasm. The enzyme catalyses tRNA(Lys) + L-lysine + ATP = L-lysyl-tRNA(Lys) + AMP + diphosphate. The polypeptide is Lysine--tRNA ligase (Aeromonas salmonicida (strain A449)).